The primary structure comprises 605 residues: Formin-binding protein 1-like (605 aa).

Residues 1-263 (MSWGTELWDQ…AAKSVDERRD (263 aa)) enclose the F-BAR domain. Residues 66-258 (FTSCIAFFNI…EGMILAAKSV (193 aa)) adopt a coiled-coil conformation. An interaction with CDC42 region spans residues 245–535 (SKCLEGMILA…EFDDEFEDDD (291 aa)). Serine 295 carries the phosphoserine modification. Residues 325-345 (FGKKPKPQSPPLTPTSLFTSS) form a disordered region. Residues 392–484 (LEDFSHLPPE…VEGKTGVRGD (93 aa)) adopt a coiled-coil conformation. The 78-residue stretch at 397–474 (HLPPEQRRKK…IHKNEAWLSE (78 aa)) folds into the REM-1 domain. Residues 480–490 (GVRGDRRHSSD) are compositionally biased toward basic and acidic residues. The interval 480-539 (GVRGDRRHSSDINHLVTQGRESPEGSYTDDANQEVRGPPQQHGHHSEFDDEFEDDDPLPA) is disordered. 3 positions are modified to phosphoserine: serine 488, serine 501, and serine 505. The segment at 522–605 (GHHSEFDDEF…VTLEKNSKGS (84 aa)) is interaction with DNM1. Acidic residues predominate over residues 527 to 536 (FDDEFEDDDP). The region spanning 538-599 (PAIGHCKAIY…PTTYIDVTLE (62 aa)) is the SH3 domain. The segment at 541–597 (GHCKAIYPFDGHNEGTLAMKEGEVLYIIEEDKGDGWTRARRQNGEEGYVPTTYIDVT) is interaction with DNM2 and WASL. Residues 541-605 (GHCKAIYPFD…VTLEKNSKGS (65 aa)) are interaction with DAAM1, DIAPH1 and DIAPH2.

The protein belongs to the FNBP1 family. As to quaternary structure, homodimerizes, the dimers can polymerize end-to-end to form filamentous structures. Interacts with GTP-bound CDC42. Interacts with DAAM1, DIAPH1, DIAPH2, DNM1, DNM2 and WASL/N-WASP. Interacts with ATG3. Interacts (via SH3 domain) with ABI1, WASF2, CDC42 and WIPF1. Isoform 1 is expressed in brain. Isoform 2 is expressed in brain, kidney and lung. Within the brain expression is seen in cortical neurons, hippocampal pyramidal neurons, hypothalamus and piriform cortex.

Its subcellular location is the cytoplasm. It is found in the cytoskeleton. The protein resides in the cell cortex. The protein localises to the cytoplasmic vesicle. It localises to the cell membrane. In terms of biological role, required to coordinate membrane tubulation with reorganization of the actin cytoskeleton during endocytosis. May bind to lipids such as phosphatidylinositol 4,5-bisphosphate and phosphatidylserine and promote membrane invagination and the formation of tubules. Also promotes CDC42-induced actin polymerization by activating the WASL-WASPIP complex, the predominant form of WASL/N-WASP in cells. Actin polymerization may promote the fission of membrane tubules to form endocytic vesicles. Essential for autophagy of intracellular bacterial pathogens. May negatively regulate neurite extension and axon branching in developing neurons. This is Formin-binding protein 1-like (Fnbp1l) from Rattus norvegicus (Rat).